A 236-amino-acid chain; its full sequence is Purine nucleoside phosphorylase DeoD-type (236 aa).

Residue H5 coordinates a purine D-ribonucleoside. Phosphate-binding positions include G21, R25, R44, and 88-91 (RIGS). Residues 180–182 (EME) and 204–205 (SD) each bind a purine D-ribonucleoside. Catalysis depends on D205, which acts as the Proton donor.

Belongs to the PNP/UDP phosphorylase family. Homohexamer; trimer of homodimers.

The enzyme catalyses a purine D-ribonucleoside + phosphate = a purine nucleobase + alpha-D-ribose 1-phosphate. It carries out the reaction a purine 2'-deoxy-D-ribonucleoside + phosphate = a purine nucleobase + 2-deoxy-alpha-D-ribose 1-phosphate. Functionally, catalyzes the reversible phosphorolytic breakdown of the N-glycosidic bond in the beta-(deoxy)ribonucleoside molecules, with the formation of the corresponding free purine bases and pentose-1-phosphate. This Tolumonas auensis (strain DSM 9187 / NBRC 110442 / TA 4) protein is Purine nucleoside phosphorylase DeoD-type.